Here is a 42-residue protein sequence, read N- to C-terminus: Purine nucleoside phosphorylase DeoD-type (42 aa).

An a purine D-ribonucleoside-binding site is contributed by 8–9 (SD). Asp-9 acts as the Proton donor in catalysis.

Belongs to the PNP/UDP phosphorylase family. As to quaternary structure, homohexamer; trimer of homodimers.

It catalyses the reaction a purine D-ribonucleoside + phosphate = a purine nucleobase + alpha-D-ribose 1-phosphate. It carries out the reaction a purine 2'-deoxy-D-ribonucleoside + phosphate = a purine nucleobase + 2-deoxy-alpha-D-ribose 1-phosphate. Catalyzes the reversible phosphorolytic breakdown of the N-glycosidic bond in the beta-(deoxy)ribonucleoside molecules, with the formation of the corresponding free purine bases and pentose-1-phosphate. The sequence is that of Purine nucleoside phosphorylase DeoD-type from Mycoplasmoides pirum (Mycoplasma pirum).